The sequence spans 402 residues: Candidapepsin-1 (402 aa).

Positions 1-25 (MVAIVTLTRQVLLTIALALFAQGAA) form a signal peptide, or 18, or 21. A propeptide spans 26 to 62 (IPEEAAKRDDNPGFVALDFDVLRKPLNLTEALLREKR) (activation peptide). An N-linked (GlcNAc...) asparagine glycan is attached at asparagine 52. Residues 76 to 389 (YASKVSVGSN…NLDANTISIA (314 aa)) form the Peptidase A1 domain. The active site involves aspartate 94. A disulfide bridge connects residues cysteine 109 and cysteine 115. Residue aspartate 282 is part of the active site. Cysteines 320 and 354 form a disulfide.

This sequence belongs to the peptidase A1 family. In terms of processing, O-glycosylated.

It localises to the secreted. The catalysed reaction is Preferential cleavage at the carboxyl of hydrophobic amino acids, but fails to cleave 15-Leu-|-Tyr-16, 16-Tyr-|-Leu-17 and 24-Phe-|-Phe-25 of insulin B chain. Activates trypsinogen, and degrades keratin.. This is Candidapepsin-1 (SAPP1) from Candida parapsilosis (Yeast).